We begin with the raw amino-acid sequence, 1067 residues long: Protein CLEC16A homolog (1067 aa).

The FPL domain occupies 50 to 199 (LRCIAEILIW…AVRTISLNVY (150 aa)). A helical transmembrane segment spans residues 333 to 353 (SIVALFLLSLVFLVVSHAPLV). Residues 409–418 (SSSSYALSED) are compositionally biased toward low complexity. 4 disordered regions span residues 409-434 (SSSS…LDSQ), 837-861 (ASSS…PMFS), 876-993 (SNSA…SRSH), and 1037-1067 (QSSE…IETV). Polar residues predominate over residues 421-432 (VESSSPATTELD). A compositionally biased stretch (polar residues) spans 876–888 (SNSAGVSRTQMAP). The segment covering 917–926 (RADHSDRERS) has biased composition (basic and acidic residues). A compositionally biased stretch (low complexity) spans 927–947 (PSVSMGSHSSSQSRENSQPRS). Over residues 951-974 (RSRESSPRMPRPRSEEIPLEDFQH) the composition is skewed to basic and acidic residues. A compositionally biased stretch (polar residues) spans 975–993 (SRNNSPHSRGNPSPASRSH). The span at 1057–1067 (EGRRRGAIETV) shows a compositional bias: basic and acidic residues.

Belongs to the CLEC16A/gop-1 family. In terms of assembly, interacts with the class C Vps-HOPS complex components; Car, Dor and Vps16a.

The protein resides in the cytoplasmic vesicle. The protein localises to the autophagosome membrane. Its subcellular location is the late endosome membrane. It is found in the golgi apparatus membrane. Required for mitophagy, autophagy and endosome maturation, possibly by acting in multiple membrane trafficking pathways. Required for endosome trafficking and maturation. Functions with the class C Vps-HOPS complex member Vps16a to promote endosomal maturation into degradative late endosomes and lysosomes. In response to starvation, functions at an early stage of autophagy to promote autophagosome growth and efficient autophagy. Essential for the recruitment of lva-positive Golgi elements to autophagosomes. Likely to function by promoting membrane traffic from the Golgi complex to the developing autophagosomes. Also regulates synaptic growth at the neuromuscular junctions (NMJ) by down-regulating BMP signaling. The sequence is that of Protein CLEC16A homolog from Drosophila melanogaster (Fruit fly).